Consider the following 537-residue polypeptide: Tyrosine-protein kinase fyna (537 aa).

G2 carries N-myristoyl glycine lipidation. S-palmitoyl cysteine attachment occurs at residues C3 and C6. T12 is modified (phosphothreonine; by PKC). Positions 13–34 are disordered; it reads KLTDERETSVSQHAGYRYGSDP. The region spanning 82 to 143 is the SH3 domain; the sequence is TGVTLFVALY…PSNYVAPVDS (62 aa). Positions 149-246 constitute an SH2 domain; sequence WYFGKLGRKD…GLCCRLIVPC (98 aa). In terms of domain architecture, Protein kinase spans 271 to 524; it reads LQLIKRLGNG…YLQAFLEDYF (254 aa). ATP-binding positions include 277–285 and K299; that span reads LGNGQFGEV. The active-site Proton acceptor is the D390. Phosphotyrosine; by autocatalysis is present on Y420. Y531 is subject to Phosphotyrosine.

It belongs to the protein kinase superfamily. Tyr protein kinase family. SRC subfamily. Mn(2+) is required as a cofactor. In terms of tissue distribution, widely expressed.

It localises to the cytoplasm. The protein localises to the nucleus. The catalysed reaction is L-tyrosyl-[protein] + ATP = O-phospho-L-tyrosyl-[protein] + ADP + H(+). With respect to regulation, inhibited by phosphorylation of Tyr-531 by leukocyte common antigen and activated by dephosphorylation of this site. Relatively inactive in the unfertilized oocyte, undergoes rapid activation immediately following fertilization. Total activity increases progressively during later development and remains elevated during sphere and epiboly stage. Functionally, tyrosine-protein kinase implicated in the control of cell growth. Plays a role in the regulation of intracellular calcium levels. Required in brain development and mature brain function with important roles in the regulation of axon growth, axon guidance, and neurite extension. Role in cntn1-mediated signaling. Required for convergent extension cell movements during gastrulation, acting with yes via rhoa. May be required for epiboly to occur, possibly through its effects in calcium signaling. This is Tyrosine-protein kinase fyna (fyna) from Danio rerio (Zebrafish).